Reading from the N-terminus, the 400-residue chain is Multidrug resistance protein MdtH (400 aa).

Over 1–12 the chain is Cytoplasmic; the sequence is MSRVSQARNLGK. Residues 13–33 traverse the membrane as a helical segment; it reads YFLLIDNMLVVLGFFVVFPLI. At 34–98 the chain is on the periplasmic side; that stretch reads SIRFVDQMGW…GFATMGIAHE (65 aa). Residues 99–116 traverse the membrane as a helical segment; it reads PWLLWFSCLLSGLGGTLF. Residues 117-138 lie on the Cytoplasmic side of the membrane; the sequence is DPPRSALVVKLIRPQQRGRFFS. Residues 139 to 159 form a helical membrane-spanning segment; it reads LLMMQDSAGAVIGALLGSWLL. The Periplasmic portion of the chain corresponds to 160–164; sequence QYDFR. A helical membrane pass occupies residues 165-185; that stretch reads LVCATGAVLFVLCAAFNAWLL. Topologically, residues 186 to 213 are cytoplasmic; sequence PAWKLSTVRTPVREGMTRVMRDKRFVTY. The chain crosses the membrane as a helical span at residues 214–232; sequence VLTLAGYYMLAVQVMLPIM. Topologically, residues 233-241 are periplasmic; sequence VNDVAGAPS. A helical transmembrane segment spans residues 242 to 262; it reads AVKWMYAIEACLSLTLLYPIA. Residues 263–274 lie on the Cytoplasmic side of the membrane; sequence RWSEKHFRLEHR. Residues 275–295 form a helical membrane-spanning segment; sequence LMAGLLIMSLSMMPVGMVSGL. The Periplasmic portion of the chain corresponds to 296 to 297; that stretch reads QQ. A helical transmembrane segment spans residues 298–318; sequence LFTLICLFYIGSIIAEPARET. Over 319 to 337 the chain is Cytoplasmic; it reads LSASLADARARGSYMGFSR. The helical transmembrane segment at 338-358 threads the bilayer; it reads LGLAIGGAIGYIGGGWLFDLG. Residues 359 to 365 are Periplasmic-facing; the sequence is KSAHQPE. Residues 366-386 traverse the membrane as a helical segment; that stretch reads LPWMMLGIIGIFTFLALGWQF. Over 387–400 the chain is Cytoplasmic; sequence SQKRAARRLLERDA.

It belongs to the major facilitator superfamily. DHA1 family. MdtH (TC 2.A.1.2.21) subfamily.

The protein resides in the cell inner membrane. This is Multidrug resistance protein MdtH from Shigella boydii serotype 4 (strain Sb227).